Consider the following 402-residue polypeptide: Tryptophan synthase beta chain (402 aa).

Lys-91 carries the post-translational modification N6-(pyridoxal phosphate)lysine.

Belongs to the TrpB family. As to quaternary structure, tetramer of two alpha and two beta chains. Pyridoxal 5'-phosphate serves as cofactor.

It carries out the reaction (1S,2R)-1-C-(indol-3-yl)glycerol 3-phosphate + L-serine = D-glyceraldehyde 3-phosphate + L-tryptophan + H2O. Its pathway is amino-acid biosynthesis; L-tryptophan biosynthesis; L-tryptophan from chorismate: step 5/5. The beta subunit is responsible for the synthesis of L-tryptophan from indole and L-serine. The sequence is that of Tryptophan synthase beta chain from Streptococcus thermophilus (strain CNRZ 1066).